Reading from the N-terminus, the 358-residue chain is Aromatic amino acid aminotransferase (358 aa).

Residue lysine 222 is modified to N6-(pyridoxal phosphate)lysine.

It belongs to the class-II pyridoxal-phosphate-dependent aminotransferase family. In terms of assembly, homodimer. Pyridoxal 5'-phosphate is required as a cofactor.

It carries out the reaction an aromatic L-alpha-amino acid + 2-oxoglutarate = an aromatic oxo-acid + L-glutamate. Aminotransferase that catalyzes the conversion of aromatic amino acids and 2-oxoglutarate into corresponding aromatic oxo acids and L-glutamate. The sequence is that of Aromatic amino acid aminotransferase from Mycobacterium sp. (strain KMS).